Reading from the N-terminus, the 425-residue chain is Peroxisomal membrane protein PEX14 (425 aa).

Disordered stretches follow at residues 49-89 and 247-425; these read RSQG…YRNA and DEPI…AAQS. Residues 56 to 76 are compositionally biased toward low complexity; the sequence is SSSVASQVSSYSPSASQSSVA. Positions 89–97 match the SH3-binding motif; sequence APPLPERDW. Positions 256–297 are enriched in polar residues; sequence PSLTTGANSLTSESSGRSSIPHSQSVPIRTQLTTPPSDSDTS. Composition is skewed to basic and acidic residues over residues 315–324 and 333–366; these read DILRKEKNRT and LGKD…PEED.

This sequence belongs to the peroxin-14 family. As to quaternary structure, interacts with PEX13 (via SH3 domain); forming the PEX13-PEX14 docking complex. Interacts with PEX5 (via WxxxF/Y motifs). Interacts with PEX20 (via WxxxF/Y motifs). Interacts with PEX3, PEX7, PEX8 and PEX17. In terms of processing, phosphorylated on serine or threonine residues.

The protein localises to the peroxisome membrane. Functionally, component of the PEX13-PEX14 docking complex, a translocon channel that specifically mediates the import of peroxisomal cargo proteins bound to PEX5 or PEX20 receptors. The PEX13-PEX14 docking complex forms a large import pore which can be opened to a diameter of about 9 nm. Mechanistically, PEX5 (or PEX20) receptor along with cargo proteins associates with the PEX14 subunit of the PEX13-PEX14 docking complex in the cytosol, leading to the insertion of the receptor into the organelle membrane with the concomitant translocation of the cargo into the peroxisome matrix. The polypeptide is Peroxisomal membrane protein PEX14 (Komagataella pastoris (Yeast)).